A 646-amino-acid polypeptide reads, in one-letter code: bZIP transcription factor 39 (646 aa).

Over 1 to 311 (MAEPALLDPT…KSKSKTKTKK (311 aa)) the chain is Cytoplasmic. The segment at 25–172 (HELPLAGGGG…GGTVCEEEED (148 aa)) is disordered. Positions 43-53 (LDGLEFDLPGD) are enriched in low complexity. Residues 59–69 (FLLRSPERDDS) show a composition bias toward basic and acidic residues. Positions 71–98 (EGSAAGSGPTASPSSSPTTSASNSAVAN) are enriched in low complexity. Residues 103-113 (EVKHEESDEGR) show a composition bias toward basic and acidic residues. Residues 159-172 (DSDEGGTVCEEEED) show a composition bias toward acidic residues. A bZIP domain is found at 172-232 (DERRAARLMR…AENATLRQQL (61 aa)). A basic motif region spans residues 174-205 (RRAARLMRNRESAQLSRQRKKRYVEELEEKVK). The interval 211-218 (INDLNSRI) is leucine-zipper. The disordered stretch occupies residues 272 to 308 (LVPIPRLKPQQPVPSSKVVKKPESKKTVENKSKSKTK). The segment covering 279-288 (KPQQPVPSSK) has biased composition (low complexity). Residues 291-303 (KKPESKKTVENKS) are compositionally biased toward basic and acidic residues. The helical transmembrane segment at 312 to 332 (VASVSLLGLLLIMLVFGAFIP) threads the bilayer. The Lumenal portion of the chain corresponds to 333–646 (GFNHNFGMCG…FKSSSPHLVN (314 aa)). Residues Asn-371, Asn-399, Asn-525, Asn-530, Asn-565, and Asn-571 are each glycosylated (N-linked (GlcNAc...) asparagine). Residues 560 to 585 (TGKTANNTEPFNRTSESSSKLPDSKP) form a disordered region. Residues 562-585 (KTANNTEPFNRTSESSSKLPDSKP) are compositionally biased toward polar residues.

This sequence belongs to the bZIP family. As to expression, highly expressed in leaf blade, and at lower levels in roots, leaf sheaths, flowers and seeds.

The protein resides in the endoplasmic reticulum membrane. The protein localises to the nucleus. In terms of biological role, transcription factor involved in endoplasmic reticulum (ER) stress response. Acts as a ER stress sensor and activates the transcription factor BZIP50 and the chaperone BIP1. In Oryza sativa subsp. japonica (Rice), this protein is bZIP transcription factor 39.